The following is a 203-amino-acid chain: Ras-like protein family member 10A (203 aa).

Residues 1-203 (MGGSLRVAVL…ALHPARCSLM (203 aa)) form a small GTPase-like region. 11 to 18 (GAPGVGKT) is a binding site for GTP. The Effector region signature appears at 33–42 (HRPTDSPCLY). Residues 59-62 (DGDV) and 129-132 (NKRD) each bind GTP. At Cys-200 the chain carries Cysteine methyl ester. The S-farnesyl cysteine moiety is linked to residue Cys-200. Residues 201–203 (SLM) constitute a propeptide, removed in mature form.

The protein belongs to the small GTPase superfamily. Ras family. Post-translationally, isoprenylation is essential for nucleolar localization, and the proliferation-inhibiting activity of RASL10A.

It localises to the cell membrane. The protein localises to the nucleus. The protein resides in the nucleolus. It catalyses the reaction GTP + H2O = GDP + phosphate + H(+). Its function is as follows. Potent inhibitor of cellular proliferation. The sequence is that of Ras-like protein family member 10A (Rasl10a) from Mus musculus (Mouse).